Consider the following 406-residue polypeptide: Serine/threonine transporter SstT (406 aa).

A run of 9 helical transmembrane segments spans residues 15 to 35, 47 to 67, 81 to 101, 140 to 160, 191 to 211, 215 to 235, 289 to 309, 315 to 335, and 362 to 382; these read LVLQILVGIILGISLALVSPS, FVGALKAIAPILVFILVAASI, IIAMYLAGTFFAALTAVVLSF, ALMSANYIGILAWGVGLGLAL, FGIFGLVASTFATTGFDALAG, LLVVLLSAMAIIALIVNPAMV, IPLGATINMAGAAITITTLTL, MGIEVDLMTAILLSVVAAVSA, and IAMQVVAVGFIIGVIQDSAET.

This sequence belongs to the dicarboxylate/amino acid:cation symporter (DAACS) (TC 2.A.23) family.

It localises to the cell inner membrane. The enzyme catalyses L-serine(in) + Na(+)(in) = L-serine(out) + Na(+)(out). The catalysed reaction is L-threonine(in) + Na(+)(in) = L-threonine(out) + Na(+)(out). Functionally, involved in the import of serine and threonine into the cell, with the concomitant import of sodium (symport system). This Vibrio vulnificus (strain CMCP6) protein is Serine/threonine transporter SstT.